We begin with the raw amino-acid sequence, 843 residues long: uncharacterized protein (843 aa).

The segment at residues 15–42 is a DNA-binding region (zn(2)-C6 fungal-type); it reads CLRCKQRKIKCDKLWPTCSKCKASSSIC.

It localises to the nucleus. Its function is as follows. Required for growth on non-fermentable carbon sources. This is an uncharacterized protein from Saccharomyces cerevisiae (strain ATCC 204508 / S288c) (Baker's yeast).